A 187-amino-acid polypeptide reads, in one-letter code: UPF0301 protein Ppha_2142 (187 aa).

It belongs to the UPF0301 (AlgH) family.

The protein is UPF0301 protein Ppha_2142 of Pelodictyon phaeoclathratiforme (strain DSM 5477 / BU-1).